The chain runs to 307 residues: Quinolinate synthase (307 aa).

Positions 23 and 40 each coordinate iminosuccinate. Cys86 contacts [4Fe-4S] cluster. Iminosuccinate-binding positions include 112–114 (YVN) and Ser129. Residue Cys173 participates in [4Fe-4S] cluster binding. Iminosuccinate contacts are provided by residues 199-201 (HPE) and Thr216. Cys265 lines the [4Fe-4S] cluster pocket.

This sequence belongs to the quinolinate synthase family. Type 2 subfamily. The cofactor is [4Fe-4S] cluster.

The protein resides in the cytoplasm. It carries out the reaction iminosuccinate + dihydroxyacetone phosphate = quinolinate + phosphate + 2 H2O + H(+). Its pathway is cofactor biosynthesis; NAD(+) biosynthesis; quinolinate from iminoaspartate: step 1/1. Functionally, catalyzes the condensation of iminoaspartate with dihydroxyacetone phosphate to form quinolinate. This is Quinolinate synthase from Methanocaldococcus jannaschii (strain ATCC 43067 / DSM 2661 / JAL-1 / JCM 10045 / NBRC 100440) (Methanococcus jannaschii).